The following is a 166-amino-acid chain: Mitochondrial inner membrane protease subunit 1 (166 aa).

Active-site residues include serine 40 and lysine 83.

Belongs to the peptidase S26 family. IMP1 subfamily. In terms of assembly, heterodimer of 2 subunits, IMMPL1 and IMMPL2.

It localises to the mitochondrion inner membrane. Its function is as follows. Catalyzes the removal of transit peptides required for the targeting of proteins from the mitochondrial matrix, across the inner membrane, into the inter-membrane space. Known to process the nuclear encoded protein DIABLO. In Mus musculus (Mouse), this protein is Mitochondrial inner membrane protease subunit 1 (Immp1l).